The chain runs to 307 residues: Type 2A encapsulin shell protein (307 aa).

The protein belongs to the encapsulin family. Family 2A subfamily. Homooligomeric. The encapsulin nanocompartment is formed by 60 subunits; monomers form pentamers which assemble to form shells. There are 12 charged pores where the pentamers meet as well as 3-fold axis channels and dimer channels. Post-translationally, the N-terminus is blocked.

The protein localises to the encapsulin nanocompartment. It is found in the cytoplasm. It localises to the cytosol. The protein resides in the cell membrane. Shell component of a type 2A encapsulin nanocompartment. Forms encapsulin nanocompartments about 24 nm in diameter from 60 monomers. Probably encapsulates at least cysteine desulfurase (CyD, AC O32975) and allows passage of cysteine into its interior, probably involved in sulfur metabolism. Expression in M.smegmatis generates a multimeric protein, whereas expression in E.coli does not. This chain is Type 2A encapsulin shell protein, found in Mycobacterium leprae (strain TN).